We begin with the raw amino-acid sequence, 156 residues long: PopC secretion inhibitor (156 aa).

Positions 1–89 are disordered; sequence MNPGSAPWER…PVRSRAEVHQ (89 aa). A compositionally biased stretch (basic and acidic residues) spans 8-28; the sequence is WERRTRERMRAMSRKNGEWGD.

In terms of assembly, interacts with PopC in non-starving cells.

The protein localises to the cytoplasm. In response to starvation, RelA is activated resulting in the accumulation of (p)ppGpp, which causes the degradation of PopD in an FtsH(D)-dependent manner, thereby releasing pre-formed PopC for secretion. Inhibitor of protease PopC. In non-starving cells, forms a cytoplasmic complex with PopC and inhibits PopC secretion and activity. The sequence is that of PopC secretion inhibitor from Myxococcus xanthus (strain DK1622).